A 143-amino-acid chain; its full sequence is Ribosome-binding factor A (143 aa).

A compositionally biased stretch (basic and acidic residues) spans 119 to 129 (AVGDKPAVPRD). Positions 119–143 (AVGDKPAVPRDDNDDPVSDNPERDA) are disordered.

Belongs to the RbfA family. As to quaternary structure, monomer. Binds 30S ribosomal subunits, but not 50S ribosomal subunits or 70S ribosomes.

It is found in the cytoplasm. One of several proteins that assist in the late maturation steps of the functional core of the 30S ribosomal subunit. Associates with free 30S ribosomal subunits (but not with 30S subunits that are part of 70S ribosomes or polysomes). Required for efficient processing of 16S rRNA. May interact with the 5'-terminal helix region of 16S rRNA. The protein is Ribosome-binding factor A of Marinobacter nauticus (strain ATCC 700491 / DSM 11845 / VT8) (Marinobacter aquaeolei).